A 122-amino-acid chain; its full sequence is Small ribosomal subunit protein uS12 (122 aa).

Belongs to the universal ribosomal protein uS12 family. Part of the 30S ribosomal subunit. Contacts proteins S8 and S17. May interact with IF1 in the 30S initiation complex.

With S4 and S5 plays an important role in translational accuracy. Functionally, interacts with and stabilizes bases of the 16S rRNA that are involved in tRNA selection in the A site and with the mRNA backbone. Located at the interface of the 30S and 50S subunits, it traverses the body of the 30S subunit contacting proteins on the other side and probably holding the rRNA structure together. The combined cluster of proteins S8, S12 and S17 appears to hold together the shoulder and platform of the 30S subunit. The protein is Small ribosomal subunit protein uS12 of Corynebacterium efficiens (strain DSM 44549 / YS-314 / AJ 12310 / JCM 11189 / NBRC 100395).